A 503-amino-acid polypeptide reads, in one-letter code: TGF-beta receptor type-1 (503 aa).

Positions 1-29 (MEAAAAAPRRPQLLIVLVAAATLLPGAKA) are cleaved as a signal peptide. Topologically, residues 30–126 (LQCFCHLCTK…QSAGLGPVEL (97 aa)) are extracellular. 5 cysteine pairs are disulfide-bonded: Cys-32–Cys-50, Cys-34–Cys-37, Cys-44–Cys-67, Cys-82–Cys-96, and Cys-97–Cys-102. N-linked (GlcNAc...) asparagine glycosylation is present at Asn-41. A helical transmembrane segment spans residues 127–147 (AAVIAGPVCFVCIALMLMVYI). Residues 148 to 503 (CHNRTVIHHR…QLSQQEGIKM (356 aa)) lie on the Cytoplasmic side of the membrane. Ser-165 carries the post-translational modification Phosphoserine. Residues 175 to 204 (TTLKDLIYDMTTSGSGSGLPLLVQRTIART) enclose the GS domain. 2 positions are modified to phosphothreonine; by TGFBR2: Thr-185 and Thr-186. Phosphoserine; by TGFBR2 is present on residues Ser-187, Ser-189, and Ser-191. The short motif at 193 to 194 (LP) is the FKBP1A-binding element. The region spanning 205 to 495 (IVLQESIGKG…LRIKKTLSQL (291 aa)) is the Protein kinase domain. ATP contacts are provided by residues 211 to 219 (IGKGRFGEV) and Lys-232. Lys-268 is covalently cross-linked (Glycyl lysine isopeptide (Lys-Gly) (interchain with G-Cter in ubiquitin)). Catalysis depends on Asp-333, which acts as the Proton acceptor. Lys-391 participates in a covalent cross-link: Glycyl lysine isopeptide (Lys-Gly) (interchain with G-Cter in SUMO).

The protein belongs to the protein kinase superfamily. TKL Ser/Thr protein kinase family. TGFB receptor subfamily. Homodimer; in the endoplasmic reticulum but also at the cell membrane. Heterohexamer; TGFB1, TGFB2 and TGFB3 homodimeric ligands assemble a functional receptor composed of two TGFBR1 and TGFBR2 heterodimers to form a ligand-receptor heterohexamer. The respective affinity of TGBRB1 and TGFBR2 for the ligands may modulate the kinetics of assembly of the receptor and may explain the different biological activities of TGFB1, TGFB2 and TGFB3. Component of a complex composed of TSC22D1 (via N-terminus), TGFBR1 and TGFBR2; the interaction between TSC22D1 and TGFBR1 is inhibited by SMAD7 and promoted by TGFB1. Interacts with CD109; inhibits TGF-beta receptor activation in keratinocytes. Interacts with RBPMS. Interacts (unphosphorylated) with FKBP1A; prevents TGFBR1 phosphorylation by TGFBR2 and stabilizes it in the inactive conformation. Interacts with SMAD2, SMAD3 and ZFYVE9; ZFYVE9 recruits SMAD2 and SMAD3 to the TGF-beta receptor. Interacts with TRAF6 and MAP3K7; induces MAP3K7 activation by TRAF6. Interacts with PARD6A; involved in TGF-beta induced epithelial to mesenchymal transition. Interacts with NEDD4L. Interacts with SMAD7, SMURF1 and SMURF2; SMAD7 recruits NEDD4L, SMURF1 and SMURF2 to the TGF-beta receptor. Interacts with USP15 and VPS39. Interacts with SDCBP (via C-terminus). Interacts with CAV1 and this interaction is impaired in the presence of SDCBP. Interacts with APPL1; interaction is TGF beta dependent; mediates trafficking of the TGFBR1 from the endosomes to the nucleus via microtubules in a TRAF6-dependent manner. Interacts with GPR50; this interaction promotes the constitutive activation of SMAD signaling pathway. Mg(2+) serves as cofactor. The cofactor is Mn(2+). In terms of processing, phosphorylated at basal levels in the absence of ligand. Activated upon phosphorylation by TGFBR2, mainly in the GS domain. Phosphorylation in the GS domain abrogates FKBP1A-binding. N-Glycosylated. Post-translationally, ubiquitinated; undergoes ubiquitination catalyzed by several E3 ubiquitin ligases including SMURF1, SMURF2 and NEDD4L2. Results in the proteasomal and/or lysosomal degradation of the receptor thereby negatively regulating its activity. Deubiquitinated by USP15, leading to stabilization of the protein and enhanced TGF-beta signal. Its ubiquitination and proteasome-mediated degradation is negatively regulated by SDCBP. Ubiquitinated by BFAR via'Lys-63'-linked ubiquitination at Lys-268, leading to TGF-beta signaling activation.

The protein resides in the cell membrane. It localises to the cell junction. It is found in the tight junction. The protein localises to the membrane raft. Its subcellular location is the cell surface. The enzyme catalyses L-threonyl-[receptor-protein] + ATP = O-phospho-L-threonyl-[receptor-protein] + ADP + H(+). It catalyses the reaction L-seryl-[receptor-protein] + ATP = O-phospho-L-seryl-[receptor-protein] + ADP + H(+). Kept in an inactive conformation by FKBP1A preventing receptor activation in absence of ligand. CD109 is another inhibitor of the receptor. In terms of biological role, transmembrane serine/threonine kinase forming with the TGF-beta type II serine/threonine kinase receptor, TGFBR2, the non-promiscuous receptor for the TGF-beta cytokines TGFB1, TGFB2 and TGFB3. Transduces the TGFB1, TGFB2 and TGFB3 signal from the cell surface to the cytoplasm and is thus regulating a plethora of physiological and pathological processes including cell cycle arrest in epithelial and hematopoietic cells, control of mesenchymal cell proliferation and differentiation, wound healing, extracellular matrix production, immunosuppression and carcinogenesis. The formation of the receptor complex composed of 2 TGFBR1 and 2 TGFBR2 molecules symmetrically bound to the cytokine dimer results in the phosphorylation and the activation of TGFBR1 by the constitutively active TGFBR2. Activated TGFBR1 phosphorylates SMAD2 which dissociates from the receptor and interacts with SMAD4. The SMAD2-SMAD4 complex is subsequently translocated to the nucleus where it modulates the transcription of the TGF-beta-regulated genes. This constitutes the canonical SMAD-dependent TGF-beta signaling cascade. Also involved in non-canonical, SMAD-independent TGF-beta signaling pathways. For instance, TGFBR1 induces TRAF6 autoubiquitination which in turn results in MAP3K7 ubiquitination and activation to trigger apoptosis. Also regulates epithelial to mesenchymal transition through a SMAD-independent signaling pathway through PARD6A phosphorylation and activation. This chain is TGF-beta receptor type-1 (Tgfbr1), found in Mus musculus (Mouse).